The following is an 89-amino-acid chain: Exodeoxyribonuclease 7 small subunit (89 aa).

Residues 1-22 are disordered; that stretch reads MRKKSSSNKEETALHPPPENFE.

Belongs to the XseB family. As to quaternary structure, heterooligomer composed of large and small subunits.

The protein resides in the cytoplasm. It carries out the reaction Exonucleolytic cleavage in either 5'- to 3'- or 3'- to 5'-direction to yield nucleoside 5'-phosphates.. Bidirectionally degrades single-stranded DNA into large acid-insoluble oligonucleotides, which are then degraded further into small acid-soluble oligonucleotides. The protein is Exodeoxyribonuclease 7 small subunit of Nitrosomonas europaea (strain ATCC 19718 / CIP 103999 / KCTC 2705 / NBRC 14298).